The chain runs to 112 residues: Seminal vesicle secretory protein 4 (112 aa).

Residues 1 to 21 (MKSTSLFLCSLLLLLVTGAIG) form the signal peptide. A disordered region spans residues 26-112 (EKYSQSEEVV…RSRFAQDVLN (87 aa)). Low complexity-rich tracts occupy residues 36–47 (SESFASGPSSGS) and 85–97 (RSSG…GESS).

It belongs to the SVP2/SVP5/SVP6 family. As to expression, testis.

Its subcellular location is the secreted. The protein resides in the extracellular space. In Rattus norvegicus (Rat), this protein is Seminal vesicle secretory protein 4 (Svs4).